We begin with the raw amino-acid sequence, 333 residues long: Ornithine carbamoyltransferase (333 aa).

Carbamoyl phosphate contacts are provided by residues 56-59 (STRT), Arg-107, and 134-137 (HPTQ). L-ornithine contacts are provided by residues Asn-167, Asp-231, and 235-236 (SM). Carbamoyl phosphate is bound by residues 273–274 (CL) and Arg-318.

The protein belongs to the aspartate/ornithine carbamoyltransferase superfamily. OTCase family.

The protein localises to the cytoplasm. The enzyme catalyses carbamoyl phosphate + L-ornithine = L-citrulline + phosphate + H(+). It functions in the pathway amino-acid degradation; L-arginine degradation via ADI pathway; carbamoyl phosphate from L-arginine: step 2/2. Reversibly catalyzes the transfer of the carbamoyl group from carbamoyl phosphate (CP) to the N(epsilon) atom of ornithine (ORN) to produce L-citrulline. The chain is Ornithine carbamoyltransferase from Clostridium botulinum (strain Kyoto / Type A2).